A 134-amino-acid chain; its full sequence is Putative integral membrane protein YxzK (134 aa).

The next 4 helical transmembrane spans lie at 3 to 23, 35 to 55, 58 to 78, and 89 to 109; these read VIRIILQVLILYVFFMIGEAI, IVGLVLLLICLGLRIVPVSII, GAGFLLSFLPLLFIPAMTGVI, and LMLLITVVLSTIVTIIAAGFA.

It localises to the cell membrane. The sequence is that of Putative integral membrane protein YxzK (yxzK) from Bacillus subtilis (strain 168).